A 149-amino-acid chain; its full sequence is UPF0336 protein CMM_2793 (149 aa).

The MaoC-like domain occupies 16 to 117; sequence APYLVGREKV…TVTKVATLGG (102 aa).

The protein belongs to the UPF0336 family.

This Clavibacter michiganensis subsp. michiganensis (strain NCPPB 382) protein is UPF0336 protein CMM_2793.